The sequence spans 49 residues: MADNIILECTECGDRSYLSKKNKRKHPERLTLKKYCPVERQVTLHRETK.

The protein belongs to the bacterial ribosomal protein bL33 family.

In Lactobacillus delbrueckii subsp. bulgaricus (strain ATCC 11842 / DSM 20081 / BCRC 10696 / JCM 1002 / NBRC 13953 / NCIMB 11778 / NCTC 12712 / WDCM 00102 / Lb 14), this protein is Large ribosomal subunit protein bL33A.